Here is a 222-residue protein sequence, read N- to C-terminus: UPF0758 protein Cpar_0627 (222 aa).

The MPN domain maps to 100-222; that stretch reads KIQGAQDVFE…WFSFRDHSLL (123 aa). Positions 171, 173, and 184 each coordinate Zn(2+). Residues 171-184 carry the JAMM motif motif; sequence HNHPSGDVQPSNAD.

Belongs to the UPF0758 family.

This is UPF0758 protein Cpar_0627 from Chlorobaculum parvum (strain DSM 263 / NCIMB 8327) (Chlorobium vibrioforme subsp. thiosulfatophilum).